Here is a 78-residue protein sequence, read N- to C-terminus: uncharacterized protein (78 aa).

A signal peptide spans 1–45 (MPVIAIIAIVIIVIILNKTGVSDSLTALTLATVAALLTGGGAAGA).

This sequence to E.coli YkfL.

This is an uncharacterized protein from Escherichia coli (strain K12).